A 208-amino-acid chain; its full sequence is dITP/XTP pyrophosphatase (208 aa).

7 to 12 (SNNAKK) provides a ligand contact to substrate. Mg(2+) is bound by residues glutamate 39 and aspartate 68. Aspartate 68 acts as the Proton acceptor in catalysis. Residues serine 69, 162–165 (FGYD), lysine 185, and 190–191 (HR) each bind substrate.

Belongs to the HAM1 NTPase family. As to quaternary structure, homodimer. Requires Mg(2+) as cofactor.

It catalyses the reaction XTP + H2O = XMP + diphosphate + H(+). The catalysed reaction is dITP + H2O = dIMP + diphosphate + H(+). It carries out the reaction ITP + H2O = IMP + diphosphate + H(+). Pyrophosphatase that catalyzes the hydrolysis of nucleoside triphosphates to their monophosphate derivatives, with a high preference for the non-canonical purine nucleotides XTP (xanthosine triphosphate), dITP (deoxyinosine triphosphate) and ITP. Seems to function as a house-cleaning enzyme that removes non-canonical purine nucleotides from the nucleotide pool, thus preventing their incorporation into DNA/RNA and avoiding chromosomal lesions. The polypeptide is dITP/XTP pyrophosphatase (Methylibium petroleiphilum (strain ATCC BAA-1232 / LMG 22953 / PM1)).